The sequence spans 964 residues: Myocardin-related transcription factor A (964 aa).

A mediates interaction with SCAI and ACTB region spans residues 1-291 (MTLLEPEMLM…KQDKGAPAMD (291 aa)). The stretch at 15–40 (SVLQLKLQQRRTREELVSQGIMPPLK) is one RPEL 1 repeat. At Ser-41 the chain carries Phosphoserine. The tract at residues 41–58 (SPAAFHEQRRSLERARTE) is intervening spacer sequence 1. The stretch at 59–84 (DYLKRKIRSRPERAELVRMHILEETS) is one RPEL 2 repeat. The short motif at 62 to 100 (KRKIRSRPERAELVRMHILEETSAEPSLQAKQLKLKRAR) is the Bipartite Nuclear localization signal element. Residues 85–102 (AEPSLQAKQLKLKRARLA) form an intervening spacer sequence 2 region. The RPEL 3 repeat unit spans residues 103–128 (DDLNEKIAQRPGPMELVEKNILPVES). 2 disordered regions span residues 145–292 (ADSS…AMDS) and 328–371 (LPAP…RQSS). 3 positions are modified to phosphoserine: Ser-159, Ser-174, and Ser-191. The segment covering 186–197 (SATSISPTQVLS) has biased composition (polar residues). Residues 215–224 (PPLPPAPLLP) show a composition bias toward pro residues. Positions 251–266 (ASEKSQRSKKAKELKP) are enriched in basic and acidic residues. Residues 340-365 (GSSAPTPSRSLSTSSSPSSGTPGPSG) show a composition bias toward low complexity. Phosphoserine occurs at positions 349 and 351. A Phosphothreonine modification is found at Thr-352. Phosphoserine is present on residues Ser-355 and Ser-358. Thr-360 bears the Phosphothreonine mark. Ser-371 is subject to Phosphoserine. The 35-residue stretch at 385 to 419 (LDDMKVAELKQELKLRSLPVSGTKTELIERLRAYQ) folds into the SAP domain. Ser-423 and Ser-484 each carry phosphoserine. The tract at residues 484–508 (STGSTPPVSPTPSERSLLSTGDENS) is disordered. Residue Thr-485 is modified to Phosphothreonine. Phosphoserine is present on Ser-487. Thr-488 carries the phosphothreonine modification. The residue at position 492 (Ser-492) is a Phosphoserine. The residue at position 494 (Thr-494) is a Phosphothreonine. Ser-496 carries the phosphoserine modification. The span at 497 to 508 (ERSLLSTGDENS) shows a compositional bias: polar residues. Ser-520, Ser-530, Ser-544, and Ser-548 each carry phosphoserine. Positions 552 to 600 (RAELEGLDKDQMLQEKDKQIEELTRMLQQKQQLVELLRLQLEQQKRAQQ) form a coiled coil. Phosphoserine occurs at positions 605, 606, 651, 687, 718, 724, and 728. The segment at 638–673 (TTNHGDTQAPAPESPPVVVKQEAGPPEPDLAPSSQL) is disordered. Disordered stretches follow at residues 706–779 (NKSA…SSSQ) and 796–849 (ADFK…RLED). Residues 715 to 727 (PAGSPQQPLSQPG) show a composition bias toward low complexity. The span at 764–779 (TVTQQPKQQENGSSSQ) shows a compositional bias: polar residues. Basic and acidic residues predominate over residues 796–810 (ADFKEPPSLPGKEKS). Ser-810 is subject to Phosphoserine. Thr-822 carries the phosphothreonine modification. Ser-826 and Ser-840 each carry phosphoserine. Position 842 is a phosphothreonine (Thr-842). At Ser-892 the chain carries Phosphoserine.

Interacts with SRF, forming the SRF-MRTFA nuclear complex which binds the 5'-CArG-3' consensus motif (CArG box) on DNA via SRF. Interacts (via RPEL repeats) with globular actin (G-actin), thereby regulating its subcellular location and activity of the complex formed with SRF. Either forms a trivalent (by binding three G-actin monomers) or pentavalent (by binding five G-actin monomers) complex with G-actin. Forms a nuclear ternary complex with SCAI and SRF, leading to suppress MRTFA-induced SRF transcriptional activity. Interacts with beta-actin (ACTB); interaction with ACTB prevents interaction with SCAI. Interacts with MRTFB. Phosphorylation at Ser-41 by Erk inhibits binding of globular actin (G-actin), unmasking the nuclear localization signal (NLS) and promoting nuclear import. In terms of tissue distribution, expressed in heart, brain, spleen, lung, liver, muscle, kidney and testis.

The protein localises to the cytoplasm. The protein resides in the nucleus. In terms of biological role, transcription coactivator that associates with the serum response factor (SRF) transcription factor to control expression of genes regulating the cytoskeleton during development, morphogenesis and cell migration. The SRF-MRTFA complex activity responds to Rho GTPase-induced changes in cellular globular actin (G-actin) concentration, thereby coupling cytoskeletal gene expression to cytoskeletal dynamics. MRTFA binds G-actin via its RPEL repeats, regulating activity of the MRTFA-SRF complex. Activity is also regulated by filamentous actin (F-actin) in the nucleus. The protein is Myocardin-related transcription factor A (Mrtfa) of Mus musculus (Mouse).